Reading from the N-terminus, the 425-residue chain is UPF0597 protein VIBHAR_03081 (425 aa).

It belongs to the UPF0597 family.

This chain is UPF0597 protein VIBHAR_03081, found in Vibrio campbellii (strain ATCC BAA-1116).